Consider the following 3658-residue polypeptide: E3 ubiquitin-protein ligase UPL2 (3658 aa).

A compositionally biased stretch (basic and acidic residues) spans 884–893; sequence DEKKSVDRAS. A disordered region spans residues 884-914; sequence DEKKSVDRASDNSVSASSSTAERESDEDSSN. Residues 894-903 show a composition bias toward low complexity; it reads DNSVSASSST. The 42-residue stretch at 1271 to 1312 folds into the UBA domain; it reads QPDEAIVGMIVEMGFSRSRAEDALRRVGTNSVEMAMDWLFTN. The 20-residue stretch at 1318 to 1337 folds into the UIM domain; the sequence is QEDDELAQALALSLGNSSET. 9 disordered regions span residues 1331 to 1360, 1702 to 1733, 2004 to 2038, 2052 to 2072, 2113 to 2204, 2293 to 2313, 2417 to 2487, 2503 to 2591, and 2958 to 2987; these read LGNS…KEPP, VSGS…SKSH, AEQL…VDEL, VDNG…RGSS, HVED…DDMV, PLFS…SAGS, ERET…EGGG, SAQG…PEVN, and SPSS…AESE. Basic and acidic residues predominate over residues 1338–1347; that stretch reads PKLEDTEKPV. A compositionally biased stretch (basic and acidic residues) spans 2007-2027; sequence LKSEVPNEQKNTDSDERHDSH. Polar residues predominate over residues 2028–2038; that stretch reads GTSTSTEVDEL. 2 stretches are compositionally biased toward acidic residues: residues 2117–2144 and 2156–2204; these read RADD…DSVE and DVED…DDMV. The span at 2297 to 2313 shows a compositional bias: polar residues; it reads RPSQTGNTASVSASAGS. The span at 2422 to 2431 shows a compositional bias: low complexity; the sequence is TTEVQEQQQP. The span at 2503–2518 shows a compositional bias: polar residues; it reads SAQGQSDTSGIQNVSV. At S2582 the chain carries Phosphoserine. Residues 3317–3658 enclose the HECT domain; it reads SPQDLKGRLN…HEANEGFGFA (342 aa). C3625 functions as the Glycyl thioester intermediate in the catalytic mechanism.

It belongs to the UPL family. TOM1/PTR1 subfamily. Widely expressed. Expressed in root, stem, cauline and rosette leaf, seedling and flower (at protein level).

It carries out the reaction S-ubiquitinyl-[E2 ubiquitin-conjugating enzyme]-L-cysteine + [acceptor protein]-L-lysine = [E2 ubiquitin-conjugating enzyme]-L-cysteine + N(6)-ubiquitinyl-[acceptor protein]-L-lysine.. The protein operates within protein modification; protein ubiquitination. Functionally, probable E3 ubiquitin-protein ligase which mediates ubiquitination and subsequent proteasomal degradation of target proteins. The polypeptide is E3 ubiquitin-protein ligase UPL2 (UPL2) (Arabidopsis thaliana (Mouse-ear cress)).